The chain runs to 372 residues: 18-hydroxynorfluorocurarine reductase (372 aa).

Residues C47, D50, H69, E70, C100, C103, C106, C114, and C172 each coordinate Zn(2+). NADP(+)-binding positions include 197-202 (GLGGIG), K226, 283-285 (LGA), S307, and R354.

The protein belongs to the zinc-containing alcohol dehydrogenase family. Homodimer. Zn(2+) serves as cofactor. Mainly expressed in roots.

It carries out the reaction (19E)-cur-19-en-17-al + NADP(+) = norfluorocurarine + NADPH + H(+). The enzyme catalyses 17,18-epoxy-17-hydroxycur-19-ene + NADP(+) = 18-hydroxynorfluorocurarine + NADPH + H(+). It functions in the pathway alkaloid biosynthesis. Its function is as follows. Alcohol dehydrogenase involved in the biosynthesis of curare monoterpene indole alkaloids (MIAs), natural products such as strychnine, a neurotoxic compound used as a pesticide to control rodents, and its pharmacologically active derivatives, including brucine, used to regulate blood pressure. Curare alkaloids act as animal glycine receptor antagonists. Catalyzes the conversion of norfluorocurarine to desoxy Wieland-Gumlich aldehyde, and of 18-OH norfluorocurarine to Wieland-Gumlich aldehyde. The protein is 18-hydroxynorfluorocurarine reductase of Strychnos nux-vomica (Poison nut).